Here is a 154-residue protein sequence, read N- to C-terminus: Aspartate carbamoyltransferase regulatory chain (154 aa).

Cysteine 109, cysteine 114, cysteine 138, and cysteine 141 together coordinate Zn(2+).

This sequence belongs to the PyrI family. As to quaternary structure, contains catalytic and regulatory chains. Zn(2+) is required as a cofactor.

Its function is as follows. Involved in allosteric regulation of aspartate carbamoyltransferase. In Tolumonas auensis (strain DSM 9187 / NBRC 110442 / TA 4), this protein is Aspartate carbamoyltransferase regulatory chain.